The sequence spans 803 residues: Phosphoribosylformylglycinamidine synthase subunit PurL (803 aa).

The active site involves histidine 65. Positions 68 and 107 each coordinate ATP. Glutamate 109 serves as a coordination point for Mg(2+). Substrate-binding positions include 110-113 (SHNH) and arginine 132. Catalysis depends on histidine 111, which acts as the Proton acceptor. Aspartate 133 contributes to the Mg(2+) binding site. Glutamine 256 lines the substrate pocket. Residue aspartate 284 participates in Mg(2+) binding. 328–330 (ESQ) lines the substrate pocket. ATP contacts are provided by asparagine 537 and glycine 574. Mg(2+) is bound at residue asparagine 575. Serine 577 lines the substrate pocket.

This sequence belongs to the FGAMS family. As to quaternary structure, monomer. Part of the FGAM synthase complex composed of 1 PurL, 1 PurQ and 2 PurS subunits.

It is found in the cytoplasm. The enzyme catalyses N(2)-formyl-N(1)-(5-phospho-beta-D-ribosyl)glycinamide + L-glutamine + ATP + H2O = 2-formamido-N(1)-(5-O-phospho-beta-D-ribosyl)acetamidine + L-glutamate + ADP + phosphate + H(+). Its pathway is purine metabolism; IMP biosynthesis via de novo pathway; 5-amino-1-(5-phospho-D-ribosyl)imidazole from N(2)-formyl-N(1)-(5-phospho-D-ribosyl)glycinamide: step 1/2. Its function is as follows. Part of the phosphoribosylformylglycinamidine synthase complex involved in the purines biosynthetic pathway. Catalyzes the ATP-dependent conversion of formylglycinamide ribonucleotide (FGAR) and glutamine to yield formylglycinamidine ribonucleotide (FGAM) and glutamate. The FGAM synthase complex is composed of three subunits. PurQ produces an ammonia molecule by converting glutamine to glutamate. PurL transfers the ammonia molecule to FGAR to form FGAM in an ATP-dependent manner. PurS interacts with PurQ and PurL and is thought to assist in the transfer of the ammonia molecule from PurQ to PurL. The polypeptide is Phosphoribosylformylglycinamidine synthase subunit PurL (Prochlorococcus marinus (strain NATL1A)).